A 221-amino-acid polypeptide reads, in one-letter code: Protein GrpE 1 (221 aa).

2 disordered regions span residues 1-44 (MTEE…AAAQ) and 192-221 (VAEP…PEEG). Positions 26-44 (KAAPSEGAAPAGDAAAAAQ) are enriched in low complexity. The segment covering 203–221 (KADEAEAADDKESGGPEEG) has biased composition (basic and acidic residues).

Belongs to the GrpE family. In terms of assembly, homodimer.

It is found in the cytoplasm. Its function is as follows. Participates actively in the response to hyperosmotic and heat shock by preventing the aggregation of stress-denatured proteins, in association with DnaK and GrpE. It is the nucleotide exchange factor for DnaK and may function as a thermosensor. Unfolded proteins bind initially to DnaJ; upon interaction with the DnaJ-bound protein, DnaK hydrolyzes its bound ATP, resulting in the formation of a stable complex. GrpE releases ADP from DnaK; ATP binding to DnaK triggers the release of the substrate protein, thus completing the reaction cycle. Several rounds of ATP-dependent interactions between DnaJ, DnaK and GrpE are required for fully efficient folding. This Streptomyces avermitilis (strain ATCC 31267 / DSM 46492 / JCM 5070 / NBRC 14893 / NCIMB 12804 / NRRL 8165 / MA-4680) protein is Protein GrpE 1.